Reading from the N-terminus, the 215-residue chain is Cytochrome b6 (215 aa).

The helical transmembrane segment at 32 to 52 (IFYCLGGITLTCFLVQVATGF) threads the bilayer. C35 is a binding site for heme c. Residues H86 and H100 each coordinate heme b. 3 consecutive transmembrane segments (helical) span residues 90 to 110 (ASMM…TGGF), 116 to 136 (LTWV…VTGY), and 186 to 206 (LHTF…FLMI). Residues H187 and H202 each coordinate heme b.

Belongs to the cytochrome b family. PetB subfamily. In terms of assembly, the 4 large subunits of the cytochrome b6-f complex are cytochrome b6, subunit IV (17 kDa polypeptide, PetD), cytochrome f and the Rieske protein, while the 4 small subunits are PetG, PetL, PetM and PetN. The complex functions as a dimer. Heme b serves as cofactor. The cofactor is heme c.

Its subcellular location is the plastid thylakoid membrane. In terms of biological role, component of the cytochrome b6-f complex, which mediates electron transfer between photosystem II (PSII) and photosystem I (PSI), cyclic electron flow around PSI, and state transitions. The protein is Cytochrome b6 (petB) of Cuscuta reflexa (Southern Asian dodder).